We begin with the raw amino-acid sequence, 872 residues long: Coatomer subunit gamma-2 (872 aa).

6 HEAT repeats span residues 64 to 101, 283 to 320, 321 to 355, 356 to 392, 395 to 430, and 467 to 504; these read MEATEAFFAMTRLFQSNDQTLRRMCYLTIKEMANISED, RELAPAVSVLQLFCSSPKPALRYAAVRTLNKVAMKHPS, AVTACNLDLENLITDSNRSIATLAITTLLKTGSES, SVDRLMKQISTFVSEISDEFKVVVVQAISALCQKYPR, SVMMTFLSNMLRDDGGFEYKRAIVDCIISIIEENPD, and PTPSKYIRFIFNRVVLENEAVRAAAVSALAKFGAQNEP.

It belongs to the COPG family. As to quaternary structure, oligomeric complex.

Its subcellular location is the cytoplasm. It localises to the golgi apparatus membrane. The protein resides in the cytoplasmic vesicle. It is found in the COPI-coated vesicle membrane. Functionally, the coatomer is a cytosolic protein complex that binds to dilysine motifs and reversibly associates with Golgi non-clathrin-coated vesicles, which further mediate biosynthetic protein transport from the ER, via the Golgi up to the trans Golgi network. Coatomer complex is required for budding from Golgi membranes, and is essential for the retrograde Golgi-to-ER transport of dilysine-tagged proteins. In Xenopus tropicalis (Western clawed frog), this protein is Coatomer subunit gamma-2 (copg2).